Consider the following 348-residue polypeptide: Phenylalanine--tRNA ligase alpha subunit (348 aa).

Glutamate 268 contributes to the Mg(2+) binding site.

Belongs to the class-II aminoacyl-tRNA synthetase family. Phe-tRNA synthetase alpha subunit type 1 subfamily. As to quaternary structure, tetramer of two alpha and two beta subunits. Mg(2+) serves as cofactor.

It localises to the cytoplasm. It carries out the reaction tRNA(Phe) + L-phenylalanine + ATP = L-phenylalanyl-tRNA(Phe) + AMP + diphosphate + H(+). The protein is Phenylalanine--tRNA ligase alpha subunit of Bordetella parapertussis (strain 12822 / ATCC BAA-587 / NCTC 13253).